We begin with the raw amino-acid sequence, 143 residues long: Nucleoside diphosphate kinase (143 aa).

The ATP site is built by K11, F59, R87, T93, R104, and N114. H117 functions as the Pros-phosphohistidine intermediate in the catalytic mechanism.

The protein belongs to the NDK family. Homotetramer. Requires Mg(2+) as cofactor.

The protein localises to the cytoplasm. The catalysed reaction is a 2'-deoxyribonucleoside 5'-diphosphate + ATP = a 2'-deoxyribonucleoside 5'-triphosphate + ADP. It carries out the reaction a ribonucleoside 5'-diphosphate + ATP = a ribonucleoside 5'-triphosphate + ADP. In terms of biological role, major role in the synthesis of nucleoside triphosphates other than ATP. The ATP gamma phosphate is transferred to the NDP beta phosphate via a ping-pong mechanism, using a phosphorylated active-site intermediate. The protein is Nucleoside diphosphate kinase of Colwellia psychrerythraea (strain 34H / ATCC BAA-681) (Vibrio psychroerythus).